Here is a 491-residue protein sequence, read N- to C-terminus: Aspartyl/glutamyl-tRNA(Asn/Gln) amidotransferase subunit B (491 aa).

This sequence belongs to the GatB/GatE family. GatB subfamily. In terms of assembly, heterotrimer of A, B and C subunits.

It catalyses the reaction L-glutamyl-tRNA(Gln) + L-glutamine + ATP + H2O = L-glutaminyl-tRNA(Gln) + L-glutamate + ADP + phosphate + H(+). The catalysed reaction is L-aspartyl-tRNA(Asn) + L-glutamine + ATP + H2O = L-asparaginyl-tRNA(Asn) + L-glutamate + ADP + phosphate + 2 H(+). Functionally, allows the formation of correctly charged Asn-tRNA(Asn) or Gln-tRNA(Gln) through the transamidation of misacylated Asp-tRNA(Asn) or Glu-tRNA(Gln) in organisms which lack either or both of asparaginyl-tRNA or glutaminyl-tRNA synthetases. The reaction takes place in the presence of glutamine and ATP through an activated phospho-Asp-tRNA(Asn) or phospho-Glu-tRNA(Gln). The protein is Aspartyl/glutamyl-tRNA(Asn/Gln) amidotransferase subunit B of Burkholderia cenocepacia (strain HI2424).